A 508-amino-acid chain; its full sequence is Flagellin (508 aa).

Belongs to the bacterial flagellin family.

It localises to the secreted. The protein resides in the bacterial flagellum. In terms of biological role, flagellin is the subunit protein which polymerizes to form the filaments of bacterial flagella. The sequence is that of Flagellin (fliC) from Salmonella oranienberg.